A 450-amino-acid polypeptide reads, in one-letter code: Putative cysteine--tRNA ligase 2 (450 aa).

The short motif at I29–H39 is the 'HIGH' region element. Positions K270–S274 match the 'KMSKS' region motif. K273 is an ATP binding site. Residues P372–Q392 are disordered.

Belongs to the class-I aminoacyl-tRNA synthetase family. In terms of assembly, monomer.

The protein resides in the cytoplasm. The enzyme catalyses tRNA(Cys) + L-cysteine + ATP = L-cysteinyl-tRNA(Cys) + AMP + diphosphate. The polypeptide is Putative cysteine--tRNA ligase 2 (cysS2) (Tropheryma whipplei (strain TW08/27) (Whipple's bacillus)).